The chain runs to 340 residues: MKQSRTKRVLAIGELKFATNTLKRLSEKYHFEFIVPDPHDRSKTIEKIHEAASKSTFDACFWLFRNAAISPFTEEMLGPLLPTCKLFVTGAAGYNNVDVDWATRNGVYVANTPNGPTEGTANMNLMLFMCTLRGAREAEQSLRLGKWRQNLSLTDDPYGKRVGIIGMGAIGKSFAQKILPLGCEIVYHNRNRLEAEEEKRLGASFVSFDELLSSSDVISINCPLTPATHDLISTKEFEKMKDGVYIINTARGAIINEDAFIKAIKSGKVARAGLDVFLNEPTPNKFWLECDKVTIQPHCGVYTNFTVAKTEECVLASIETFLDTGIPTNPVNGPFGMNGC.

Residues 169–170, 249–251, and D275 contribute to the NAD(+) site; these read AI and TAR. R251 is a catalytic residue. Residue E280 is part of the active site. Residue H298 is the Proton donor of the active site. 298 to 301 lines the NAD(+) pocket; it reads HCGV.

This sequence belongs to the D-isomer specific 2-hydroxyacid dehydrogenase family.

This Schizosaccharomyces pombe (strain 972 / ATCC 24843) (Fission yeast) protein is Putative 2-hydroxyacid dehydrogenase C1773.17c.